The chain runs to 321 residues: Acetyl-coenzyme A carboxylase carboxyl transferase subunit alpha (321 aa).

Positions 37–298 (DLDDEIKRLQ…KQRILSDLED (262 aa)) constitute a CoA carboxyltransferase C-terminal domain.

This sequence belongs to the AccA family. In terms of assembly, acetyl-CoA carboxylase is a heterohexamer composed of biotin carboxyl carrier protein (AccB), biotin carboxylase (AccC) and two subunits each of ACCase subunit alpha (AccA) and ACCase subunit beta (AccD).

Its subcellular location is the cytoplasm. It catalyses the reaction N(6)-carboxybiotinyl-L-lysyl-[protein] + acetyl-CoA = N(6)-biotinyl-L-lysyl-[protein] + malonyl-CoA. It functions in the pathway lipid metabolism; malonyl-CoA biosynthesis; malonyl-CoA from acetyl-CoA: step 1/1. Its function is as follows. Component of the acetyl coenzyme A carboxylase (ACC) complex. First, biotin carboxylase catalyzes the carboxylation of biotin on its carrier protein (BCCP) and then the CO(2) group is transferred by the carboxyltransferase to acetyl-CoA to form malonyl-CoA. In Mannheimia succiniciproducens (strain KCTC 0769BP / MBEL55E), this protein is Acetyl-coenzyme A carboxylase carboxyl transferase subunit alpha.